Here is a 176-residue protein sequence, read N- to C-terminus: Translation initiation factor IF-3 (176 aa).

This sequence belongs to the IF-3 family. In terms of assembly, monomer.

Its subcellular location is the cytoplasm. IF-3 binds to the 30S ribosomal subunit and shifts the equilibrium between 70S ribosomes and their 50S and 30S subunits in favor of the free subunits, thus enhancing the availability of 30S subunits on which protein synthesis initiation begins. The protein is Translation initiation factor IF-3 of Nitratidesulfovibrio vulgaris (strain ATCC 29579 / DSM 644 / CCUG 34227 / NCIMB 8303 / VKM B-1760 / Hildenborough) (Desulfovibrio vulgaris).